Reading from the N-terminus, the 762-residue chain is LON peptidase N-terminal domain and RING finger protein 1 (762 aa).

The disordered stretch occupies residues M1–E35. The stretch at W47–A80 is one TPR 1 repeat. The RING-type 1 zinc-finger motif lies at C118–R154. TPR repeat units follow at residues A201–D233, T235–W267, and P268–F301. S420 bears the Phosphoserine mark. An RING-type 2 zinc finger spans residues C468–K506. The 211-residue stretch at T547–S757 folds into the Lon N-terminal domain.

In Mus musculus (Mouse), this protein is LON peptidase N-terminal domain and RING finger protein 1 (Lonrf1).